Here is a 1176-residue protein sequence, read N- to C-terminus: Pesticidal crystal protein Cry1Aa (1176 aa).

This sequence belongs to the delta endotoxin family.

Promotes colloidosmotic lysis by binding to the midgut epithelial cells of many lepidopteran larvae. The polypeptide is Pesticidal crystal protein Cry1Aa (cry1Aa) (Bacillus thuringiensis subsp. entomocidus).